Consider the following 276-residue polypeptide: Pantothenate synthetase (276 aa).

27–34 (MGALHRGH) lines the ATP pocket. Histidine 34 (proton donor) is an active-site residue. Position 58 (glutamine 58) interacts with (R)-pantoate. Residue glutamine 58 coordinates beta-alanine. 147–150 (GKKD) provides a ligand contact to ATP. (R)-pantoate is bound at residue glutamine 153. ATP contacts are provided by residues valine 176 and 184 to 187 (LSSR).

Belongs to the pantothenate synthetase family. In terms of assembly, homodimer.

The protein localises to the cytoplasm. The enzyme catalyses (R)-pantoate + beta-alanine + ATP = (R)-pantothenate + AMP + diphosphate + H(+). The protein operates within cofactor biosynthesis; (R)-pantothenate biosynthesis; (R)-pantothenate from (R)-pantoate and beta-alanine: step 1/1. Catalyzes the condensation of pantoate with beta-alanine in an ATP-dependent reaction via a pantoyl-adenylate intermediate. The polypeptide is Pantothenate synthetase (Helicobacter pylori (strain G27)).